The primary structure comprises 107 residues: Glutaredoxin 4 (107 aa).

The Glutaredoxin domain maps to 4–106 (IDKIKQQINE…TLLKETATKH (103 aa)). Lys21 is a binding site for glutathione. Cys29 serves as a coordination point for [2Fe-2S] cluster. Residues Arg58, Phe70, and 83–84 (CD) each bind glutathione.

The protein belongs to the glutaredoxin family. Monothiol subfamily. In terms of assembly, homodimer.

Its subcellular location is the cytoplasm. Monothiol glutaredoxin involved in the biogenesis of iron-sulfur clusters. The protein is Glutaredoxin 4 (grxD) of Haemophilus ducreyi (strain 35000HP / ATCC 700724).